A 157-amino-acid chain; its full sequence is Transcription elongation factor GreB (157 aa).

Belongs to the GreA/GreB family. GreB subfamily.

Its function is as follows. Necessary for efficient RNA polymerase transcription elongation past template-encoded arresting sites. The arresting sites in DNA have the property of trapping a certain fraction of elongating RNA polymerases that pass through, resulting in locked ternary complexes. Cleavage of the nascent transcript by cleavage factors such as GreA or GreB allows the resumption of elongation from the new 3'terminus. GreB releases sequences of up to 9 nucleotides in length. The sequence is that of Transcription elongation factor GreB from Salmonella typhimurium (strain LT2 / SGSC1412 / ATCC 700720).